A 122-amino-acid chain; its full sequence is Large ribosomal subunit protein uL14 (122 aa).

The protein belongs to the universal ribosomal protein uL14 family. In terms of assembly, part of the 50S ribosomal subunit. Forms a cluster with proteins L3 and L19. In the 70S ribosome, L14 and L19 interact and together make contacts with the 16S rRNA in bridges B5 and B8.

Binds to 23S rRNA. Forms part of two intersubunit bridges in the 70S ribosome. This Brachyspira hyodysenteriae (strain ATCC 49526 / WA1) protein is Large ribosomal subunit protein uL14.